Here is a 411-residue protein sequence, read N- to C-terminus: Probable tRNA pseudouridine synthase D (411 aa).

Residue aspartate 81 is the Nucleophile of the active site. Residues 154–375 (GTPNFFGLQR…SGSYRPADTL (222 aa)) form the TRUD domain.

Belongs to the pseudouridine synthase TruD family.

It carries out the reaction uridine(13) in tRNA = pseudouridine(13) in tRNA. In terms of biological role, could be responsible for synthesis of pseudouridine from uracil-13 in transfer RNAs. The chain is Probable tRNA pseudouridine synthase D from Archaeoglobus fulgidus (strain ATCC 49558 / DSM 4304 / JCM 9628 / NBRC 100126 / VC-16).